A 349-amino-acid chain; its full sequence is Bifunctional nitrilase/nitrile hydratase NIT4A (349 aa).

The CN hydrolase domain maps to 29 to 301; sequence VRATVVQAST…EALISADLDL (273 aa). Glu69 (proton acceptor) is an active-site residue. Residue Lys156 is part of the active site. Cys190 serves as the catalytic Nucleophile.

It belongs to the carbon-nitrogen hydrolase superfamily. Nitrilase family. In terms of tissue distribution, ubiquitous.

It catalyses the reaction L-asparagine = 3-cyano-L-alanine + H2O. It carries out the reaction 3-cyano-L-alanine + 2 H2O = L-aspartate + NH4(+). Its function is as follows. Involved in the cyanide detoxification pathway. Has nitrilase and nitrile-hydratase activity in the ratio 4.0:1, producing both asparagine and aspartic acid from beta-cyano-L-alanine (Ala(CN)). Can also use 3-phenylpropionitrile as substrate, but not indole-3-acetonitrile. The polypeptide is Bifunctional nitrilase/nitrile hydratase NIT4A (NIT4A) (Lupinus angustifolius (Narrow-leaved blue lupine)).